A 193-amino-acid chain; its full sequence is Holliday junction branch migration complex subunit RuvA (193 aa).

A domain I region spans residues 1–64; that stretch reads MIGRIAGTLI…EDAHLLYGFG (64 aa). The tract at residues 65 to 143 is domain II; that stretch reads SAAERNTFRE…AELGHAPGAA (79 aa). Positions 144–151 are flexible linker; that stretch reads PVHDSAVD. The domain III stretch occupies residues 151-193; that stretch reads DILNALLALGYSEKEAATAIKQVPAGTGVSDGIKLALKALSKA.

It belongs to the RuvA family. Homotetramer. Forms an RuvA(8)-RuvB(12)-Holliday junction (HJ) complex. HJ DNA is sandwiched between 2 RuvA tetramers; dsDNA enters through RuvA and exits via RuvB. An RuvB hexamer assembles on each DNA strand where it exits the tetramer. Each RuvB hexamer is contacted by two RuvA subunits (via domain III) on 2 adjacent RuvB subunits; this complex drives branch migration. In the full resolvosome a probable DNA-RuvA(4)-RuvB(12)-RuvC(2) complex forms which resolves the HJ.

The protein resides in the cytoplasm. Its function is as follows. The RuvA-RuvB-RuvC complex processes Holliday junction (HJ) DNA during genetic recombination and DNA repair, while the RuvA-RuvB complex plays an important role in the rescue of blocked DNA replication forks via replication fork reversal (RFR). RuvA specifically binds to HJ cruciform DNA, conferring on it an open structure. The RuvB hexamer acts as an ATP-dependent pump, pulling dsDNA into and through the RuvAB complex. HJ branch migration allows RuvC to scan DNA until it finds its consensus sequence, where it cleaves and resolves the cruciform DNA. The polypeptide is Holliday junction branch migration complex subunit RuvA (Cupriavidus pinatubonensis (strain JMP 134 / LMG 1197) (Cupriavidus necator (strain JMP 134))).